A 944-amino-acid chain; its full sequence is Bifunctional uridylyltransferase/uridylyl-removing enzyme (944 aa).

The interval 1–371 (MRDLDFTNIL…RFTHRNRKIA (371 aa)) is uridylyltransferase. Residues 372–727 (GSVEFVEDRG…VRTDSFHAIT (356 aa)) are uridylyl-removing. Residues 488–604 (VDEHLIRTVD…TDFADRVQSL (117 aa)) enclose the HD domain. ACT domains lie at 728–809 (EITV…EVIA) and 839–918 (VIEV…LRER). The interval 911 to 944 (EEDELRERMPSGIIAPAATARTPPASEKKAGSPI) is disordered. Positions 925–935 (APAATARTPPA) are enriched in low complexity.

Belongs to the GlnD family. It depends on Mg(2+) as a cofactor.

The enzyme catalyses [protein-PII]-L-tyrosine + UTP = [protein-PII]-uridylyl-L-tyrosine + diphosphate. The catalysed reaction is [protein-PII]-uridylyl-L-tyrosine + H2O = [protein-PII]-L-tyrosine + UMP + H(+). With respect to regulation, uridylyltransferase (UTase) activity is inhibited by glutamine, while glutamine likely activates uridylyl-removing (UR) activity. Modifies, by uridylylation and deuridylylation, the PII regulatory proteins GlnB and GlnK, in response to the nitrogen status of the cell that GlnD senses through the glutamine level. Under low glutamine levels, catalyzes the conversion of the PII proteins and UTP to PII-UMP and PPi, while under higher glutamine levels, GlnD likely hydrolyzes PII-UMP to PII and UMP (deuridylylation). Thus, controls uridylylation state and activity of the PII proteins, and plays an important role in the regulation of nitrogen metabolism. This is Bifunctional uridylyltransferase/uridylyl-removing enzyme from Rhizobium leguminosarum bv. viciae.